The chain runs to 549 residues: MKNINPTQTAAWQALQKHFDEMKDVTIADLFAKDGDRFSKFSATFDDQMLVDYSKNRITEETLAKLQDLAKECDLASAIKSMFSGEKINRTENRAVLHVALRNRSNTPILVDGKDVMPEVNAVLEKMKTFSEAIISGEWKGYTGKAITDVVNIGIGGSDLGPYMVTEALRPYKNHLNMHFVSNVDGTHIAEVLKKVNPETTLFLVASKTFTTQETMTNAHSARDWFLKAAGDEKHVAKHFAALSTNATAVGEFGIDTANMFEFWDWVGGRYSLWSAIGLSIVLSIGFDNFVELLSGAHAMDKHFSTTPAEKNLPVLLALIGIWYNNFFGAETEAILPYDQYMHRFAAYFQQGNMESNGKYVDRNGNVVDYQTGPIIWGEPGTNGQHAFYQLIHQGTKMVPCDFIAPAITHNPLSDHHQKLLSNFFAQTEALAFGKSREVVEQEYRDQGKDPATLDYVVPFKVFEGNRPTNSILLREITPFSLGALIALYEHKIFTQGVILNIFTFDQWGVELGKQLANRILPELKDDKEISSHDSSTNGLINRYKAWRG.

Residues K80, K228, and K234 each carry the N6-acetyllysine modification. E355 serves as the catalytic Proton donor. Catalysis depends on residues H386 and K514.

This sequence belongs to the GPI family.

Its subcellular location is the cytoplasm. It carries out the reaction alpha-D-glucose 6-phosphate = beta-D-fructose 6-phosphate. Its pathway is carbohydrate biosynthesis; gluconeogenesis. The protein operates within carbohydrate degradation; glycolysis; D-glyceraldehyde 3-phosphate and glycerone phosphate from D-glucose: step 2/4. In terms of biological role, catalyzes the reversible isomerization of glucose-6-phosphate to fructose-6-phosphate. The chain is Glucose-6-phosphate isomerase from Escherichia fergusonii (strain ATCC 35469 / DSM 13698 / CCUG 18766 / IAM 14443 / JCM 21226 / LMG 7866 / NBRC 102419 / NCTC 12128 / CDC 0568-73).